The chain runs to 217 residues: Ribosomal RNA large subunit methyltransferase E (217 aa).

5 residues coordinate S-adenosyl-L-methionine: G64, W66, D92, D108, and D133. The Proton acceptor role is filled by K173.

Belongs to the class I-like SAM-binding methyltransferase superfamily. RNA methyltransferase RlmE family.

The protein resides in the cytoplasm. It carries out the reaction uridine(2552) in 23S rRNA + S-adenosyl-L-methionine = 2'-O-methyluridine(2552) in 23S rRNA + S-adenosyl-L-homocysteine + H(+). Specifically methylates the uridine in position 2552 of 23S rRNA at the 2'-O position of the ribose in the fully assembled 50S ribosomal subunit. The chain is Ribosomal RNA large subunit methyltransferase E from Delftia acidovorans (strain DSM 14801 / SPH-1).